The following is a 572-amino-acid chain: Hemagglutinin-neuraminidase (572 aa).

At 1–31 (MEYWKHTNHGKDACNELGTSMATHGNKITNK) the chain is on the intravirion side. Residues 32–52 (ITYILWTIILVLLSIIFIIVL) form a helical membrane-spanning segment. Residues 53–572 (INSIKSEKAH…FKTEIPKSCS (520 aa)) are Virion surface-facing. Intrachain disulfides connect Cys190/Cys214 and Cys256/Cys269. The tract at residues 252 to 257 (NRKSCS) is involved in neuraminidase activity. N-linked (GlcNAc...) asparagine; by host glycosylation is found at Asn308 and Asn351. 2 disulfide bridges follow: Cys355–Cys469 and Cys463–Cys473. N-linked (GlcNAc...) asparagine; by host glycosylation is present at Asn523. Residues Cys535 and Cys544 are joined by a disulfide bond.

The protein belongs to the paramyxoviruses hemagglutinin-neuraminidase family. Homotetramer; composed of disulfide-linked homodimers. Interacts with F protein trimer.

The protein resides in the virion membrane. The protein localises to the host cell membrane. It carries out the reaction Hydrolysis of alpha-(2-&gt;3)-, alpha-(2-&gt;6)-, alpha-(2-&gt;8)- glycosidic linkages of terminal sialic acid residues in oligosaccharides, glycoproteins, glycolipids, colominic acid and synthetic substrates.. Its function is as follows. Attaches the virus to sialic acid-containing cell receptors and thereby initiating infection. Binding of HN protein to the receptor induces a conformational change that allows the F protein to trigger virion/cell membranes fusion. Functionally, neuraminidase activity ensures the efficient spread of the virus by dissociating the mature virions from the neuraminic acid containing glycoproteins. This chain is Hemagglutinin-neuraminidase (HN), found in Homo sapiens (Human).